The primary structure comprises 714 residues: Fatty acid oxidation complex subunit alpha (714 aa).

The segment at 1 to 190 is enoyl-CoA hydratase; the sequence is MEMASAFTLN…KLGLVDDVVP (190 aa). The 3-hydroxyacyl-CoA dehydrogenase stretch occupies residues 306 to 714; the sequence is APLNSVGILG…FWKTTATDLQ (409 aa).

The protein in the N-terminal section; belongs to the enoyl-CoA hydratase/isomerase family. It in the central section; belongs to the 3-hydroxyacyl-CoA dehydrogenase family. As to quaternary structure, heterotetramer of two alpha chains (FadJ) and two beta chains (FadI).

Its subcellular location is the cytoplasm. The enzyme catalyses a (3S)-3-hydroxyacyl-CoA = a (2E)-enoyl-CoA + H2O. The catalysed reaction is a 4-saturated-(3S)-3-hydroxyacyl-CoA = a (3E)-enoyl-CoA + H2O. It catalyses the reaction a (3S)-3-hydroxyacyl-CoA + NAD(+) = a 3-oxoacyl-CoA + NADH + H(+). It carries out the reaction (3S)-3-hydroxybutanoyl-CoA = (3R)-3-hydroxybutanoyl-CoA. The protein operates within lipid metabolism; fatty acid beta-oxidation. Functionally, catalyzes the formation of a hydroxyacyl-CoA by addition of water on enoyl-CoA. Also exhibits 3-hydroxyacyl-CoA epimerase and 3-hydroxyacyl-CoA dehydrogenase activities. The protein is Fatty acid oxidation complex subunit alpha of Escherichia coli O17:K52:H18 (strain UMN026 / ExPEC).